The chain runs to 1311 residues: Clustered mitochondria protein homolog (1311 aa).

The disordered stretch occupies residues 1–46 (MAATNEVIPTSENPSDVSGSSQKLATEETALANGVDHEEEDSGEAG). A compositionally biased stretch (polar residues) spans 7 to 24 (VIPTSENPSDVSGSSQKL). The 245-residue stretch at 335–579 (DITRTQENYL…RVTPLDITWM (245 aa)) folds into the Clu domain. Disordered regions lie at residues 629 to 691 (ERKR…QERI) and 915 to 965 (QSQT…VNAS). Positions 655–691 (EASKSDEPTENGELAKKADESDKDAEPSKPAADQERI) are enriched in basic and acidic residues. Polar residues predominate over residues 915-930 (QSQTEAAAAPPTTNGE). 3 TPR repeats span residues 1034–1067 (ARVY…SERT), 1076–1109 (LLNY…WKVV), and 1118–1151 (ITTI…CEEV). The segment at 1236 to 1311 (VSPRVTLGQT…RGGAAAAAGK (76 aa)) is disordered. The span at 1242 to 1253 (LGQTQLQPQVGQ) shows a compositional bias: polar residues. The span at 1259–1279 (AGRDSRSSRGLDSRSIDELLK) shows a compositional bias: basic and acidic residues. Positions 1289 to 1303 (KNKKRPGRSNPKRRG) are enriched in basic residues.

It belongs to the CLU family. In terms of assembly, may associate with the eukaryotic translation initiation factor 3 (eIF-3) complex.

The protein resides in the cytoplasm. Functionally, mRNA-binding protein involved in proper cytoplasmic distribution of mitochondria. The sequence is that of Clustered mitochondria protein homolog from Sclerotinia sclerotiorum (strain ATCC 18683 / 1980 / Ss-1) (White mold).